The primary structure comprises 1128 residues: Transient receptor potential-gamma protein (1128 aa).

Over 1–325 (MMEEENTIRP…MALQAVDIIR (325 aa)) the chain is Cytoplasmic. ANK repeat units follow at residues 57 to 86 (LGRT…DTKD) and 131 to 160 (PDIT…VLPM). The helical transmembrane segment at 326–346 (IGIMFPIFSLAYILAPYSSIG) threads the bilayer. Residues 347–403 (QTMRKPFIKFICHSASYFTFLFLLMLASQRIETFIGGWFFADSSGMLNTMEELPTKR) are Extracellular-facing. The helical transmembrane segment at 404–424 (GAKPTFIEWLILAWVSGLIWS) threads the bilayer. Topologically, residues 425 to 444 (EVKQLWDVGLQEYLNDMWNV) are cytoplasmic. A helical membrane pass occupies residues 445–465 (IDFVTNSLYVATVALRVVSFF). Residues 466–492 (QVQKEMIYNSHATDLPRERWDAWDPML) lie on the Extracellular side of the membrane. Residues 493–513 (ISEGLFSAANIFSSLKLVYIF) traverse the membrane as a helical segment. The Cytoplasmic portion of the chain corresponds to 514 to 535 (SVNPHLGPLQVSLSRMVMDIMK). A helical membrane pass occupies residues 536–556 (FFFLYVLVLFAFGSGLNQLLW). Residues 557–629 (YYADLEKKRC…GIKIFTRFWG (73 aa)) are Extracellular-facing. Residues 630 to 650 (MLMFGTYSVINIVVLLNLLIA) form a helical membrane-spanning segment. Topologically, residues 651-1128 (MMNHSYQLIS…SCVSTTGAIG (478 aa)) are cytoplasmic. 2 disordered regions span residues 865 to 898 (RQQS…TASS) and 1064 to 1111 (AAEA…SVNS). Residues 878–893 (ESPTTPTAPQGTQGAA) are compositionally biased toward low complexity. Polar residues predominate over residues 1085-1111 (TQSQHDSVETNSTFTLSIDPSNTSVNS).

This sequence belongs to the transient receptor (TC 1.A.4) family. STrpC subfamily. Interacts preferentially with trpl and interacts to a lower extent with trp. Expressed predominantly in the rhabdomeres of photoreceptor cells.

Its subcellular location is the cell projection. It localises to the rhabdomere membrane. A light-sensitive calcium channel that is required for inositide-mediated Ca(2+) entry in the retina during phospholipase C (PLC)-mediated phototransduction. Forms a regulated cation channel when heteromultimerized with trpl. The protein is Transient receptor potential-gamma protein (Trpgamma) of Drosophila melanogaster (Fruit fly).